Consider the following 150-residue polypeptide: Peptide deformylase (150 aa).

2 residues coordinate Fe cation: Cys-88 and His-130. Residue Glu-131 is part of the active site. His-134 lines the Fe cation pocket.

It belongs to the polypeptide deformylase family. It depends on Fe(2+) as a cofactor.

It catalyses the reaction N-terminal N-formyl-L-methionyl-[peptide] + H2O = N-terminal L-methionyl-[peptide] + formate. In terms of biological role, removes the formyl group from the N-terminal Met of newly synthesized proteins. Requires at least a dipeptide for an efficient rate of reaction. N-terminal L-methionine is a prerequisite for activity but the enzyme has broad specificity at other positions. The chain is Peptide deformylase from Desulfitobacterium hafniense (strain DSM 10664 / DCB-2).